We begin with the raw amino-acid sequence, 203 residues long: Type III effector protein HopBF1 (203 aa).

Residues 1-23 are disordered; that stretch reads MFNVSNNVAPSRYQGPSSTSVTP. Ser-40, Gln-41, Lys-42, Asp-107, Ile-109, and Asp-114 together coordinate ATP. Asp-155 is an active-site residue. Gln-157 is a binding site for ATP.

Belongs to the HopBF1 family.

It localises to the secreted. The protein localises to the host cell. It carries out the reaction L-seryl-[protein] + ATP = O-phospho-L-seryl-[protein] + ADP + H(+). In terms of biological role, effector protein that targets and inactivates the eukaryotic molecular chaperone HSP90 during infection. HopBF1 is recognized by HSP90 as a host client. As a result, HopBF1 phosphorylates HSP90, leading to the inactivation of the HSP90 ATPase activity and chaperone function. In vitro, can phosphorylate the recombinant yeast HSP82 (HSP90) and human HSP 90-beta on Ser-108. This chain is Type III effector protein HopBF1, found in Ewingella americana (strain ATCC 33852 / DSM 4580 / CCUG 14506 / JCM 5911 / LMG 7869 / NCTC 12157 / CDC 1468-78).